The following is a 526-amino-acid chain: Glucomannan 4-beta-mannosyltransferase 1 (526 aa).

A helical membrane pass occupies residues 31–51; it reads VIIPLLKLAVIVCSVMSIMLF. Residue D130 is part of the active site. Positions 189 and 191 each coordinate substrate. D283 is a catalytic residue. The next 4 membrane-spanning stretches (helical) occupy residues 362-382, 399-419, 477-497, and 501-521; these read IVAH…CVIV, ITIL…LWIL, PLEI…LLFG, and FFVY…GLVG.

The protein belongs to the glycosyltransferase 2 family. Plant cellulose synthase-like A subfamily.

Its subcellular location is the golgi apparatus membrane. The enzyme catalyses GDP-mannose + (glucomannan)n = GDP + (glucomannan)n+1.. In terms of biological role, possesses 4-beta-mannosyltransferase activity on mannan using GDP-mannose. The beta-1,4-mannan product is the backbone for galactomannan synthesis by galactomannan galactosyltransferase. The galactomannan is a hemicellulosic storage polysaccharide accumulated in the form of secondary wall thickenings in the seed endosperm. The polypeptide is Glucomannan 4-beta-mannosyltransferase 1 (Cyamopsis tetragonoloba (Guar)).